A 1064-amino-acid chain; its full sequence is Ribosome quality control complex subunit NEMF (1064 aa).

Position 7 is a phosphothreonine (T7). Residues 296–359 (VDEFYSKIEG…LIEMNLQIVD (64 aa)) are a coiled coil. S417 bears the Phosphoserine mark. Positions 420–451 (EDGDGDASIENSDAEAPKGKKKKQKNKQLQKP) are disordered. Residues 438 to 447 (GKKKKQKNKQ) are compositionally biased toward basic residues. Positions 481 to 512 (AAKKTQRTVEAAEKAFKSAEKKTKQTLKEVQT) form a coiled coil. A compositionally biased stretch (acidic residues) spans 694-707 (EQLEGGDSSEEETE). Disordered stretches follow at residues 694-718 (EQLE…DVEL) and 731-973 (SGRD…SLTG). The segment covering 731 to 756 (SGRDELSSEDGEAKAVTKDQEPIGEM) has biased composition (basic and acidic residues). At S737 the chain carries Phosphoserine. Over residues 771–781 (IDLSHLQSQRP) the composition is skewed to polar residues. Residues 828–839 (IEEKDKERESAV) show a composition bias toward basic and acidic residues. The stretch at 858-882 (KRGQKSKMKKMKEKYKDQDDEDREL) forms a coiled coil. Basic residues predominate over residues 859–870 (RGQKSKMKKMKE). Basic and acidic residues predominate over residues 947–959 (DDPHDDKEEHDLD). The span at 960–973 (QQGNEENLFDSLTG) shows a compositional bias: polar residues.

Belongs to the NEMF family. Component of the ribosome quality control complex (RQC), composed of the E3 ubiquitin ligase LTN1, TCF25 and NEMF associated with the 60S ribosomal subunit. The complex probably also contains VCP/p97 and its ubiquitin-binding cofactors. Interacts (via its N-terminus) with XPO1.

It is found in the cytoplasm. The protein resides in the cytosol. Its subcellular location is the nucleus. Its function is as follows. Key component of the ribosome quality control complex (RQC), a ribosome-associated complex that mediates the extraction of incompletely synthesized nascent chains from stalled ribosomes as well as their ubiquitin-mediated proteasomal degradation. Thereby, frees 60S subunit ribosomes from the stalled translation complex and prevents the accumulation of nascent polypeptide chains that are potentially toxic for the cell. Within the RQC complex, NEMF specifically binds stalled 60S ribosomal subunits by recognizing an exposed, nascent chain-conjugated tRNA moiety and promotes the recruitment of LTN1 to stalled 60S subunits. Following binding to stalled 60S ribosomal subunits, NEMF mediates CAT tailing by recruiting alanine-charged tRNA to the A-site and directing the elongation of stalled nascent chains independently of mRNA or 40S subunits, leading to non-templated C-terminal alanine extensions (CAT tails). Mainly recruits alanine-charged tRNAs, but can also other amino acid-charged tRNAs. CAT tailing is required to promote ubiquitination of stalled nascent chains by different E3 ubiquitin-protein ligases. In the canonical RQC pathway (RQC-L), CAT tailing facilitates LTN1-dependent ubiquitination by exposing lysine residues that would otherwise remain buried in the ribosomal exit tunnel. In the alternative RQC pathway (RQC-C) CAT tailing creates an C-degron mainly composed of alanine that is recognized by the CRL2(KLHDC10) and RCHY1/PIRH2 E3 ligases, leading to ubiquitination and degradation of stalled nascent chains. NEMF may also indirectly play a role in nuclear export. The chain is Ribosome quality control complex subunit NEMF from Mus musculus (Mouse).